A 71-amino-acid chain; its full sequence is MPIVKVRENEPFDVALRRFKRSCEKAGILSEVRRREHYEKPTTVRKRAKAAAQKRHAKKLARENARRVRLY.

The disordered stretch occupies residues Glu-39–Tyr-71. Over residues Thr-43–Lys-59 the composition is skewed to basic residues. Over residues Leu-60–Tyr-71 the composition is skewed to basic and acidic residues.

This sequence belongs to the bacterial ribosomal protein bS21 family.

The chain is Small ribosomal subunit protein bS21 from Vibrio atlanticus (strain LGP32) (Vibrio splendidus (strain Mel32)).